The following is a 164-amino-acid chain: Shikimate kinase (164 aa).

11 to 16 (GSGKST) is a binding site for ATP. S15 contributes to the Mg(2+) binding site. The substrate site is built by D33, R57, and G79. R117 serves as a coordination point for ATP. R134 is a binding site for substrate.

The protein belongs to the shikimate kinase family. Monomer. Mg(2+) serves as cofactor.

It is found in the cytoplasm. The catalysed reaction is shikimate + ATP = 3-phosphoshikimate + ADP + H(+). The protein operates within metabolic intermediate biosynthesis; chorismate biosynthesis; chorismate from D-erythrose 4-phosphate and phosphoenolpyruvate: step 5/7. Functionally, catalyzes the specific phosphorylation of the 3-hydroxyl group of shikimic acid using ATP as a cosubstrate. This Persephonella marina (strain DSM 14350 / EX-H1) protein is Shikimate kinase.